The following is a 191-amino-acid chain: Protein RER1 homolog (191 aa).

3 consecutive transmembrane segments (helical) span residues 35–55 (AFRW…IILL), 57–77 (GFYI…LLFL), and 135–155 (FFDV…LTFL).

This sequence belongs to the RER1 family.

Its subcellular location is the membrane. Functionally, may be involved in protein transport along the secretory pathway. This is Protein RER1 homolog (rer-1) from Caenorhabditis elegans.